The primary structure comprises 712 residues: Polyribonucleotide nucleotidyltransferase (712 aa).

The Mg(2+) site is built by Asp487 and Asp493. In terms of domain architecture, KH spans 554–613 (PRIEVMNIPVDKIREVIGSGGKVIREIVEKTGAKINIEDDGTVKIASSSGKEIEAARKWI). Residues 623 to 691 (GQIYEGTVVK…ERGKVRLSMK (69 aa)) enclose the S1 motif domain.

Belongs to the polyribonucleotide nucleotidyltransferase family. It depends on Mg(2+) as a cofactor.

Its subcellular location is the cytoplasm. The enzyme catalyses RNA(n+1) + phosphate = RNA(n) + a ribonucleoside 5'-diphosphate. Involved in mRNA degradation. Catalyzes the phosphorolysis of single-stranded polyribonucleotides processively in the 3'- to 5'-direction. This is Polyribonucleotide nucleotidyltransferase from Rhizobium etli (strain CIAT 652).